The following is a 258-amino-acid chain: Tryptophan synthase alpha chain (258 aa).

Active-site proton acceptor residues include Glu47 and Asp58.

It belongs to the TrpA family. In terms of assembly, tetramer of two alpha and two beta chains.

It carries out the reaction (1S,2R)-1-C-(indol-3-yl)glycerol 3-phosphate + L-serine = D-glyceraldehyde 3-phosphate + L-tryptophan + H2O. It participates in amino-acid biosynthesis; L-tryptophan biosynthesis; L-tryptophan from chorismate: step 5/5. In terms of biological role, the alpha subunit is responsible for the aldol cleavage of indoleglycerol phosphate to indole and glyceraldehyde 3-phosphate. This chain is Tryptophan synthase alpha chain, found in Bacillus cereus (strain ATCC 10987 / NRS 248).